Consider the following 246-residue polypeptide: Acetoacetate decarboxylase (246 aa).

The active-site Schiff-base intermediate with acetoacetate is the K116.

The protein belongs to the ADC family.

It catalyses the reaction acetoacetate + H(+) = acetone + CO2. In terms of biological role, catalyzes the conversion of acetoacetate to acetone and carbon dioxide. The chain is Acetoacetate decarboxylase from Burkholderia cenocepacia (strain ATCC BAA-245 / DSM 16553 / LMG 16656 / NCTC 13227 / J2315 / CF5610) (Burkholderia cepacia (strain J2315)).